The sequence spans 263 residues: Hemophilin (263 aa).

The first 20 residues, 1-20 (MKISQLFLGLVACSTAFAYA), serve as a signal peptide directing secretion. Heme b is bound by residues His42, Tyr58, Ser104, and His105.

In terms of assembly, monomer in solution. Interacts with host hemoglobin.

It is found in the secreted. Functionally, part of a high affinity heme acquisition system. Functions as a hemophore that acquires heme from human hemoglobin and delivers the heme to its cognate receptor, HphR, facilitating transport of heme across the bacterial outer membrane. Apo HphA interacts specifically with human hemoglobin and steals heme through a passive process probably due to its high affinity for heme. It can also acquire heme complexed to human serum albumin. Plays a supporting role for full virulence, acting as an accessory factor that enhances the process of heme uptake. The sequence is that of Hemophilin from Acinetobacter baumannii.